The sequence spans 338 residues: Penicillin V acylase (338 aa).

Residues 1–3 constitute a propeptide, removed in mature form; sequence MLG. Residue Cys-4 is the Nucleophile of the active site.

It belongs to the peptidase C59 family. In terms of assembly, homotetramer. Expressed as an inactive precursor that is cleaved autocatalytically at Gly-3/Cys-4 to generate an active enzyme. Processing exposes a catalytic N-terminal nucleophile residue with a free alpha amino group.

It carries out the reaction a penicillin + H2O = 6-aminopenicillanate + a carboxylate. With respect to regulation, hydrolase activity is rapidly inhibited by lysine modifying reagents. Its function is as follows. Catalyzes the hydrolysis of penicillin V to 6-aminopenicillanate (6-APA). Exhibits high specificity for penicillin V. Penicillin G and other related compounds are hydrolyzed at less than 10% of the rate of penicillin V. Among the cephalosporins, cephalosporin C is resistant to cleavage, whereas cephalosporin G is cleaved at about 1% of the rate of cleavage of penicillin V. The sequence is that of Penicillin V acylase from Lysinibacillus sphaericus (Bacillus sphaericus).